Consider the following 132-residue polypeptide: Small ribosomal subunit protein uS8 (132 aa).

Belongs to the universal ribosomal protein uS8 family. As to quaternary structure, part of the 30S ribosomal subunit. Contacts proteins S5 and S12.

Its function is as follows. One of the primary rRNA binding proteins, it binds directly to 16S rRNA central domain where it helps coordinate assembly of the platform of the 30S subunit. This Rickettsia canadensis (strain McKiel) protein is Small ribosomal subunit protein uS8.